A 186-amino-acid chain; its full sequence is Peptidyl-tRNA hydrolase (186 aa).

Y14 is a binding site for tRNA. H19 (proton acceptor) is an active-site residue. TRNA-binding residues include F64, N66, and N112.

This sequence belongs to the PTH family. In terms of assembly, monomer.

The protein localises to the cytoplasm. The catalysed reaction is an N-acyl-L-alpha-aminoacyl-tRNA + H2O = an N-acyl-L-amino acid + a tRNA + H(+). Functionally, hydrolyzes ribosome-free peptidyl-tRNAs (with 1 or more amino acids incorporated), which drop off the ribosome during protein synthesis, or as a result of ribosome stalling. Its function is as follows. Catalyzes the release of premature peptidyl moieties from peptidyl-tRNA molecules trapped in stalled 50S ribosomal subunits, and thus maintains levels of free tRNAs and 50S ribosomes. In Mycoplasma capricolum subsp. capricolum (strain California kid / ATCC 27343 / NCTC 10154), this protein is Peptidyl-tRNA hydrolase.